A 103-amino-acid polypeptide reads, in one-letter code: Histone H4, minor (103 aa).

Positions 1-12 (MAGGKGGKGMGK) are enriched in gly residues. The interval 1–29 (MAGGKGGKGMGKVGAKRHSRKSNKASIEG) is disordered. Lysine 5, lysine 8, lysine 12, and lysine 16 each carry N6-acetyllysine. Residues 14–23 (GAKRHSRKSN) show a composition bias toward basic residues. Residues 16 to 21 (KRHSRK) mediate DNA binding.

The protein belongs to the histone H4 family. The nucleosome is a histone octamer containing two molecules each of H2A, H2B, H3 and H4 assembled in one H3-H4 heterotetramer and two H2A-H2B heterodimers. The octamer wraps approximately 147 bp of DNA.

It is found in the nucleus. The protein resides in the chromosome. Functionally, core component of nucleosome. Nucleosomes wrap and compact DNA into chromatin, limiting DNA accessibility to the cellular machineries which require DNA as a template. Histones thereby play a central role in transcription regulation, DNA repair, DNA replication and chromosomal stability. DNA accessibility is regulated via a complex set of post-translational modifications of histones, also called histone code, and nucleosome remodeling. This Tetrahymena pyriformis protein is Histone H4, minor.